We begin with the raw amino-acid sequence, 544 residues long: Lysophosphatidylcholine acyltransferase 2 (544 aa).

At 1–58 (MNRCAEAAAVAATVPGSGVGDAGLRPPMVPRQASFFPPPVPNPFVQQTTISASRRLQM) the chain is on the cytoplasmic side. Residues 59–79 (FLLGIILLPVRALLVGIILLL) form a helical; Signal-anchor for type II membrane protein membrane-spanning segment. Topologically, residues 80 to 544 (AWPFAVISTA…EEGTSDKKVD (465 aa)) are lumenal. An HXXXXD motif motif is present at residues 146–151 (HSTFFD). The short motif at 220–223 (EGTC) is the EGTC motif element. 2 consecutive EF-hand domains span residues 391–426 (PVSD…LCNP) and 428–463 (NTEE…SLGV). Positions 404, 406, 408, 410, 415, 441, 443, 445, 447, and 452 each coordinate Ca(2+). Over residues 520–532 (TAPSVASNKVSPE) the composition is skewed to polar residues. Residues 520-544 (TAPSVASNKVSPESQEEGTSDKKVD) form a disordered region.

The protein belongs to the 1-acyl-sn-glycerol-3-phosphate acyltransferase family. In terms of tissue distribution, highest expression is found in resident macrophages and casein-induced neutrophils followed by skin, colon, spleen and thioglycollate-induced macrophages. Detected in erythroleukemic cells but not in reticulocytes.

It localises to the endoplasmic reticulum membrane. The protein localises to the golgi apparatus membrane. The protein resides in the cell membrane. It is found in the lipid droplet. It catalyses the reaction a 1-acyl-sn-glycero-3-phosphocholine + an acyl-CoA = a 1,2-diacyl-sn-glycero-3-phosphocholine + CoA. It carries out the reaction a 1-O-alkyl-sn-glycero-3-phosphocholine + acetyl-CoA = a 1-O-alkyl-2-acetyl-sn-glycero-3-phosphocholine + CoA. The enzyme catalyses a 1-acyl-sn-glycero-3-phosphate + an acyl-CoA = a 1,2-diacyl-sn-glycero-3-phosphate + CoA. The catalysed reaction is a 1-O-(1Z-alkenyl)-sn-glycero-3-phosphocholine + an acyl-CoA = a 1-O-(1Z-alkenyl)-2-acyl-sn-glycero-3-phosphocholine + CoA. It catalyses the reaction 1-O-octadecyl-sn-glycero-3-phosphocholine + acetyl-CoA = 1-O-octadecyl-2-acetyl-sn-glycero-3-phosphocholine + CoA. It carries out the reaction 1-hexadecanoyl-sn-glycero-3-phosphocholine + acetyl-CoA = 1-hexadecanoyl-2-acetyl-sn-glycero-3-phosphocholine + CoA. The enzyme catalyses 1-octadecanoyl-sn-glycero-3-phosphocholine + acetyl-CoA = 1-octadecanoyl-2-acetyl-sn-glycero-3-phosphocholine + CoA. The catalysed reaction is a 1-O-(1Z-alkenyl)-sn-glycero-3-phosphocholine + acetyl-CoA = 1-O-(1Z)-alkenyl-2-acetyl-sn-glycero-3-phosphocholine + CoA. It catalyses the reaction 1-O-hexadecyl-sn-glycero-3-phosphocholine + acetyl-CoA = 1-O-hexadecyl-2-acetyl-sn-glycero-3-phosphocholine + CoA. It carries out the reaction 1-O-octadecyl-sn-glycero-3-phosphocholine + (5Z,8Z,11Z,14Z)-eicosatetraenoyl-CoA = 1-O-octadecyl-2-(5Z,8Z,11Z,14Z)-eicosatetraenoyl-sn-glycero-3-phosphocholine + CoA. The enzyme catalyses 1-hexadecanoyl-sn-glycero-3-phosphate + (9Z)-octadecenoyl-CoA = 1-hexadecanoyl-2-(9Z-octadecenoyl)-sn-glycero-3-phosphate + CoA. The catalysed reaction is 1-(9Z-octadecenoyl)-sn-glycero-3-phosphate + (9Z)-octadecenoyl-CoA = 1,2-di-(9Z-octadecenoyl)-sn-glycero-3-phosphate + CoA. It catalyses the reaction 1-(9Z-octadecenoyl)-sn-glycero-3-phosphate + hexadecanoyl-CoA = 1-(9Z)-octadecenoyl-2-hexadecanoyl-sn-glycero-3-phosphate + CoA. It carries out the reaction 1-heptadecanoyl-sn-glycero-3-phosphate + (9Z)-octadecenoyl-CoA = 1-heptadecanoyl-2-(9Z)-octadecenoyl-sn-glycero-3-phosphate + CoA. The enzyme catalyses 1-octadecanoyl-sn-glycero-3-phosphate + (9Z)-octadecenoyl-CoA = 1-octadecanoyl-2-(9Z-octadecenoyl)-sn-glycero-3-phosphate + CoA. The catalysed reaction is heptadecanoyl-CoA + 1-(9Z-octadecenoyl)-sn-glycero-3-phosphate = 1-(9Z)-octadecenoyl-2-heptadecanoyl-sn-glycero-3-phosphate + CoA. It catalyses the reaction 1-(9Z-octadecenoyl)-sn-glycero-3-phosphate + (9Z,12Z)-octadecadienoyl-CoA = 1-(9Z)-octadecenoyl-2-(9Z,12Z)-octadecadienoyl-sn-glycero-3-phosphate + CoA. It carries out the reaction 1-(9Z-octadecenoyl)-sn-glycero-3-phosphate + tetradecanoyl-CoA = 1-(9Z)-octadecenoyl-2-tetradecanoyl-sn-glycero-3-phosphate + CoA. The enzyme catalyses pentadecanoyl-CoA + 1-(9Z-octadecenoyl)-sn-glycero-3-phosphate = 1-(9Z)-octadecenoyl-2-pentadecanoyl-sn-glycero-3-phosphate + CoA. The catalysed reaction is nonadecanoyl-CoA + 1-(9Z-octadecenoyl)-sn-glycero-3-phosphate = 1-(9Z)-octadecenoyl-2-nonadecanoyl-sn-glycero-3-phosphate + CoA. It catalyses the reaction 1-hexadecanoyl-sn-glycero-3-phosphocholine + (9Z)-octadecenoyl-CoA = 1-hexadecanoyl-2-(9Z-octadecenoyl)-sn-glycero-3-phosphocholine + CoA. It participates in lipid metabolism; phospholipid metabolism. Acetyltransferase activity is increased following acute inflammatory stimulation by lipopolysaccharide (LPS). Acyltransferase activity is unchanged. Functionally, exhibits both acyltransferase and acetyltransferase activities. Activity is calcium-dependent. Catalyzes the conversion of lysophosphatidylcholine (1-acyl-sn-glycero-3-phosphocholine or LPC) into phosphatidylcholine (1,2-diacyl-sn-glycero-3-phosphocholine or PC). Catalyzes the conversion 1-acyl-sn-glycerol-3-phosphate (lysophosphatidic acid or LPA) into 1,2-diacyl-sn-glycerol-3-phosphate (phosphatidic acid or PA) by incorporating an acyl moiety at the sn-2 position of the glycerol backbone. Involved in platelet-activating factor (PAF) biosynthesis by catalyzing the conversion of the PAF precursor, 1-O-alkyl-sn-glycero-3-phosphocholine (lyso-PAF) into 1-O-alkyl-2-acetyl-sn-glycero-3-phosphocholine (PAF). Also converts lyso-PAF to 1-O-alkyl-2-acyl-sn-glycero-3-phosphocholine (PC), a major component of cell membranes and a PAF precursor. Under resting conditions, acyltransferase activity is preferred. Upon acute inflammatory stimulus, acetyltransferase activity is enhanced and PAF synthesis increases. Involved in the regulation of lipid droplet number and size. This is Lysophosphatidylcholine acyltransferase 2 (Lpcat2) from Mus musculus (Mouse).